The primary structure comprises 228 residues: Ion-translocating oxidoreductase complex subunit E (228 aa).

Helical transmembrane passes span 24–44 (LLGL…LGLG), 73–93 (VFVL…NAFF), 95–115 (ELYL…AIIG), 130–150 (LADG…LGAL), and 184–204 (GFLL…LIAL).

It belongs to the NqrDE/RnfAE family. As to quaternary structure, the complex is composed of six subunits: RnfA, RnfB, RnfC, RnfD, RnfE and RnfG.

Its subcellular location is the cell inner membrane. Part of a membrane-bound complex that couples electron transfer with translocation of ions across the membrane. In Thioalkalivibrio sulfidiphilus (strain HL-EbGR7), this protein is Ion-translocating oxidoreductase complex subunit E.